Here is a 172-residue protein sequence, read N- to C-terminus: Protein sym-1 (172 aa).

A run of 5 helical transmembrane segments spans residues 13-33 (PLLTQAVTTSILFGVGDVAAQ), 52-72 (MVLYGGAVFGPAATTWFRFLQ), 94-114 (GLFAPTFIGIFLGSMAVLEGT), 128-148 (LSTNWMVWPFVQMVNFKVVPL), and 152-172 (VLFVNVISIGWNCYLSWLNGQ).

It belongs to the peroxisomal membrane protein PXMP2/4 family.

Its subcellular location is the mitochondrion inner membrane. May be involved in cellular response to stress. Required to maintain mitochondrial DNA (mtDNA) integrity and stability. The polypeptide is Protein sym-1 (sym-1) (Neurospora crassa (strain ATCC 24698 / 74-OR23-1A / CBS 708.71 / DSM 1257 / FGSC 987)).